We begin with the raw amino-acid sequence, 782 residues long: MKISSGAINFSTIPNQVKKLITSIREHTKNGFASKITSVKNTHASLNEKIKTGKSSSIEFALPQKIKDFFQPKDKNTLNKTLITVKNIKDTNNAGKINISAEDVSKMNAAFMRKHIANQSRDYNYRVTGAAPLPGGVSVSANNRPTVSEGRTPPVSPSLSLQATSFPSSPADWAKKLTDAVLRQKAGETLTAADRDFSNADFRNITFSKILPPSFMERDGDIIKGFNFSNSKFTYSDISHLHFDECRFTYSTLSDVVCSNTKFSNSDMNEVFLQYSITTQQQPSFIDTTLKNTLIRHKANLSGVILHEPDNSSPPSVSRGGNFIRLGDIWLQMPLLWTENAVDGFLNHEHNNGKSILMTIDSLPDKYSQEKVRAMEDLVKSLRGGRLTEAGIRPVESSLVSVLAHPPYTQSALISEWIRPVQERFFAHQCQTYNDVPLPAPDTYYQQRILPVLLDSFDRNSAAMTTHSGLFNQVILHCMTGVDCTDGTRQKAAALYEQYLAHPAVSPHIHNGLFGNYDGSPDWTTRAADNFLLLSSQDSDTAMMLSTNTLLTMLNPTPDTAWDNFYLLRAGENVSTAQISPVELFRHDFPVFLAAFNQQATQRRFGELIDIILSTEEHGELNQQFIAATNQKHSTVKLIDDASVSRLNTIFDPLLPEGKLSPAHYQHILSAYHLTDATPQKQAETLFCLSTAFARYSSSAIFGTEHDSPPALRGYAEALMQKAWELSPAIFPSSEQFTDWSDRFHGLHGAFTCTSVVADSMQRHARKYFPSVLSSILPLAWA.

Cys753 acts as the Glycyl thioester intermediate in catalysis.

It belongs to the SopA E3 ligase family. In terms of processing, ubiquitinated in the presence of host E1 ubiquitin-activating enzyme, E2 ubiquitin-conjugating enzyme and ubiquitin.

The protein localises to the secreted. Its subcellular location is the host cell. It carries out the reaction S-ubiquitinyl-[E2 ubiquitin-conjugating enzyme]-L-cysteine + [acceptor protein]-L-lysine = [E2 ubiquitin-conjugating enzyme]-L-cysteine + N(6)-ubiquitinyl-[acceptor protein]-L-lysine.. Functionally, effector proteins function to alter host cell physiology and promote bacterial survival in host tissues. This protein is an E3 ubiquitin ligase that interferes with host's ubiquitination pathway. The sequence is that of E3 ubiquitin-protein ligase SopA (sopA) from Salmonella choleraesuis (strain SC-B67).